A 425-amino-acid chain; its full sequence is Adenylosuccinate synthetase (425 aa).

GTP-binding positions include 12-18 (GDEGKGK) and 40-42 (GHT). The Proton acceptor role is filled by Asp13. Asp13 and Gly40 together coordinate Mg(2+). Residues 13 to 16 (DEGK), 38 to 41 (NAGH), Thr127, Arg141, Gln222, Thr237, and Arg301 each bind IMP. His41 acts as the Proton donor in catalysis. 297–303 (AVTGRPR) is a binding site for substrate. GTP contacts are provided by residues Arg303, 329–331 (KID), and 411–413 (SVG).

Belongs to the adenylosuccinate synthetase family. Homodimer. Mg(2+) serves as cofactor.

The protein localises to the cytoplasm. The enzyme catalyses IMP + L-aspartate + GTP = N(6)-(1,2-dicarboxyethyl)-AMP + GDP + phosphate + 2 H(+). Its pathway is purine metabolism; AMP biosynthesis via de novo pathway; AMP from IMP: step 1/2. Functionally, plays an important role in the de novo pathway of purine nucleotide biosynthesis. Catalyzes the first committed step in the biosynthesis of AMP from IMP. This chain is Adenylosuccinate synthetase, found in Fusobacterium nucleatum.